A 92-amino-acid polypeptide reads, in one-letter code: uncharacterized protein (92 aa).

The protein belongs to the IUNH family.

This is an uncharacterized protein from Corynebacterium ammoniagenes (Brevibacterium ammoniagenes).